The sequence spans 235 residues: Aspartate/glutamate leucyltransferase (235 aa).

This sequence belongs to the R-transferase family. Bpt subfamily.

It localises to the cytoplasm. The enzyme catalyses N-terminal L-glutamyl-[protein] + L-leucyl-tRNA(Leu) = N-terminal L-leucyl-L-glutamyl-[protein] + tRNA(Leu) + H(+). The catalysed reaction is N-terminal L-aspartyl-[protein] + L-leucyl-tRNA(Leu) = N-terminal L-leucyl-L-aspartyl-[protein] + tRNA(Leu) + H(+). Functions in the N-end rule pathway of protein degradation where it conjugates Leu from its aminoacyl-tRNA to the N-termini of proteins containing an N-terminal aspartate or glutamate. The protein is Aspartate/glutamate leucyltransferase of Pseudomonas putida (strain ATCC 47054 / DSM 6125 / CFBP 8728 / NCIMB 11950 / KT2440).